A 391-amino-acid chain; its full sequence is MPKTLHLAEQLIARPSLTPDDAGCQQIIAERLAPLGFSCETITSGPADFRVTNLWAKRAAAPVKSAQHTTKLVVFAGHTDIVPSGPVQQWRCHPFTPTQFDGKLYGRGAADMKTSLAAFVVAVEEFLTAQPDTALAIGFLLTSDEEGPALDGTVKVCEALQARGERIDYCIVGEPTSLERTGDMIKNGRRGTLSARLTVKGVQGHIAYPHLAKNPIHLVAPALAELVGVEWDRGNAFFPPTSWQISNIHSGTGASNVIPGAVVIDFNFRFSTESTPESLQTRLAAVLERHELDYELAWTLGGTPFLTEPGTLVDAVVDAIKQETGLTTVLSTTGGTSDGRFIARICPQVIEFGPPNASIHKIDEHINVADIEPLTNIYRRVLENLSAGLSA.

Position 78 (His78) interacts with Zn(2+). Residue Asp80 is part of the active site. Asp111 serves as a coordination point for Zn(2+). Glu145 (proton acceptor) is an active-site residue. Zn(2+)-binding residues include Glu146, Glu174, and His360.

It belongs to the peptidase M20A family. DapE subfamily. As to quaternary structure, homodimer. The cofactor is Zn(2+). It depends on Co(2+) as a cofactor.

The catalysed reaction is N-succinyl-(2S,6S)-2,6-diaminopimelate + H2O = (2S,6S)-2,6-diaminopimelate + succinate. The protein operates within amino-acid biosynthesis; L-lysine biosynthesis via DAP pathway; LL-2,6-diaminopimelate from (S)-tetrahydrodipicolinate (succinylase route): step 3/3. Its function is as follows. Catalyzes the hydrolysis of N-succinyl-L,L-diaminopimelic acid (SDAP), forming succinate and LL-2,6-diaminopimelate (DAP), an intermediate involved in the bacterial biosynthesis of lysine and meso-diaminopimelic acid, an essential component of bacterial cell walls. The sequence is that of Succinyl-diaminopimelate desuccinylase from Albidiferax ferrireducens (strain ATCC BAA-621 / DSM 15236 / T118) (Rhodoferax ferrireducens).